A 594-amino-acid polypeptide reads, in one-letter code: Aspartate--tRNA(Asp/Asn) ligase (594 aa).

Position 175 (E175) interacts with L-aspartate. An aspartate region spans residues 199 to 202; it reads QLFK. R221 contributes to the L-aspartate binding site. Residues 221–223 and Q230 each bind ATP; that span reads RDE. H446 is an L-aspartate binding site. Residue E491 participates in ATP binding. R498 contributes to the L-aspartate binding site. 543-546 serves as a coordination point for ATP; sequence GLDR.

Belongs to the class-II aminoacyl-tRNA synthetase family. Type 1 subfamily. As to quaternary structure, homodimer.

It is found in the cytoplasm. It catalyses the reaction tRNA(Asx) + L-aspartate + ATP = L-aspartyl-tRNA(Asx) + AMP + diphosphate. In terms of biological role, aspartyl-tRNA synthetase with relaxed tRNA specificity since it is able to aspartylate not only its cognate tRNA(Asp) but also tRNA(Asn). Reaction proceeds in two steps: L-aspartate is first activated by ATP to form Asp-AMP and then transferred to the acceptor end of tRNA(Asp/Asn). The sequence is that of Aspartate--tRNA(Asp/Asn) ligase from Thermodesulfovibrio yellowstonii (strain ATCC 51303 / DSM 11347 / YP87).